The primary structure comprises 238 residues: 3-dehydroquinate dehydratase (238 aa).

Residues 35 to 37 (ELR) and arginine 70 each bind 3-dehydroquinate. The active-site Proton donor/acceptor is histidine 133. Catalysis depends on lysine 160, which acts as the Schiff-base intermediate with substrate. Residues arginine 202 and glutamine 225 each coordinate 3-dehydroquinate.

This sequence belongs to the type-I 3-dehydroquinase family. Homodimer.

The catalysed reaction is 3-dehydroquinate = 3-dehydroshikimate + H2O. It participates in metabolic intermediate biosynthesis; chorismate biosynthesis; chorismate from D-erythrose 4-phosphate and phosphoenolpyruvate: step 3/7. Functionally, involved in the third step of the chorismate pathway, which leads to the biosynthesis of aromatic amino acids. Catalyzes the cis-dehydration of 3-dehydroquinate (DHQ) and introduces the first double bond of the aromatic ring to yield 3-dehydroshikimate. The protein is 3-dehydroquinate dehydratase of Staphylococcus aureus (strain Mu3 / ATCC 700698).